The following is a 58-amino-acid chain: Cecropin-B (58 aa).

A signal peptide spans 1-21; the sequence is ILSFVFACLLALSAVSAAPEP.

It belongs to the cecropin family.

It is found in the secreted. Its function is as follows. Cecropins have lytic and antibacterial activity against several Gram-positive and Gram-negative bacteria. This Spodoptera litura (Asian cotton leafworm) protein is Cecropin-B (CECB).